The sequence spans 226 residues: PDGF-related-transforming protein sis (226 aa).

Basic residues predominate over residues 201–215 (RRPPKGKHRKCKHTH). Positions 201 to 226 (RRPPKGKHRKCKHTHDKTALKETLGA) are disordered.

It belongs to the PDGF/VEGF growth factor family.

This Woolly monkey sarcoma virus (WMSV) protein is PDGF-related-transforming protein sis (V-SIS).